Here is a 382-residue protein sequence, read N- to C-terminus: Ribosomal RNA large subunit methyltransferase F (382 aa).

Disordered stretches follow at residues 1 to 53 and 269 to 288; these read MTKP…LHRD and NRASKGHKLEPKAPKDKSQL. Basic residues predominate over residues 8-24; it reads ASRKPVTKSGRNSKRSR. Positions 269–286 are enriched in basic and acidic residues; that stretch reads NRASKGHKLEPKAPKDKS.

It belongs to the methyltransferase superfamily. METTL16/RlmF family.

The protein localises to the cytoplasm. It carries out the reaction adenosine(1618) in 23S rRNA + S-adenosyl-L-methionine = N(6)-methyladenosine(1618) in 23S rRNA + S-adenosyl-L-homocysteine + H(+). Specifically methylates the adenine in position 1618 of 23S rRNA. The polypeptide is Ribosomal RNA large subunit methyltransferase F (Shewanella woodyi (strain ATCC 51908 / MS32)).